Reading from the N-terminus, the 391-residue chain is uncharacterized protein (391 aa).

A compositionally biased stretch (low complexity) spans 118-149; it reads SINSLPPTTTTTTTTTTTTTIPNNNNNITLSP. 4 disordered regions span residues 118 to 162, 184 to 258, 272 to 327, and 337 to 356; these read SINS…HQHP, QTNV…TPRN, NNNL…NNLN, and LNLNNNNNNNNNNNNNNNNN. Over residues 150-162 the composition is skewed to basic residues; sequence QHHHGQQQHHQHP. Positions 186–211 are enriched in low complexity; it reads NVNNNNNNNNNNNNNNNSNNNNNNNN. Over residues 212–223 the composition is skewed to polar residues; sequence DFSTPNSFSVPT. The segment covering 244–256 has biased composition (low complexity); it reads NTPNNSTSNPTTP.

This is an uncharacterized protein from Dictyostelium discoideum (Social amoeba).